Here is a 110-residue protein sequence, read N- to C-terminus: MSNDENRSGSPTGPNTSVITKVKPKTKRPNLYRVLILNDDYTPMEFVVHVLEKFFQKDVEAATKIMLHVHHHGIGECGVFTYEIAETKVTQVMDFARKHQHPLQCVMEKK.

A disordered region spans residues M1 to P24. Over residues S8–I19 the composition is skewed to polar residues.

It belongs to the ClpS family. Binds to the N-terminal domain of the chaperone ClpA.

Its function is as follows. Involved in the modulation of the specificity of the ClpAP-mediated ATP-dependent protein degradation. This is ATP-dependent Clp protease adapter protein ClpS 2 from Bradyrhizobium diazoefficiens (strain JCM 10833 / BCRC 13528 / IAM 13628 / NBRC 14792 / USDA 110).